Here is a 278-residue protein sequence, read N- to C-terminus: Orotidine 5'-phosphate decarboxylase (278 aa).

Substrate is bound by residues D40, 65-67 (KTH), 96-105 (DRKFIDIGNT), Y230, and R248. K98 functions as the Proton donor in the catalytic mechanism.

The protein belongs to the OMP decarboxylase family.

It carries out the reaction orotidine 5'-phosphate + H(+) = UMP + CO2. It participates in pyrimidine metabolism; UMP biosynthesis via de novo pathway; UMP from orotate: step 2/2. This Penicillium chrysogenum (Penicillium notatum) protein is Orotidine 5'-phosphate decarboxylase (pyrG).